The sequence spans 244 residues: Probable proteasome subunit alpha type-1 (244 aa).

This sequence belongs to the peptidase T1A family. In terms of assembly, the 26S proteasome consists of a 20S proteasome core and two 19S regulatory subunits. The 20S proteasome core is composed of 28 subunits that are arranged in four stacked rings, resulting in a barrel-shaped structure. The two end rings are each formed by seven alpha subunits, and the two central rings are each formed by seven beta subunits. The catalytic chamber with the active sites is on the inside of the barrel.

The protein resides in the cytoplasm. It localises to the nucleus. The proteasome is a multicatalytic proteinase complex which is characterized by its ability to cleave peptides with Arg, Phe, Tyr, Leu, and Glu adjacent to the leaving group at neutral or slightly basic pH. The proteasome has an ATP-dependent proteolytic activity. This chain is Probable proteasome subunit alpha type-1, found in Schizosaccharomyces pombe (strain 972 / ATCC 24843) (Fission yeast).